Here is a 165-residue protein sequence, read N- to C-terminus: Transcription elongation factor A protein-like 1 (165 aa).

Disordered regions lie at residues Met-1–Glu-66 and Ile-89–His-124. The span at Cys-33–Leu-60 shows a compositional bias: acidic residues. The span at His-101–His-124 shows a compositional bias: basic and acidic residues.

This sequence belongs to the TFS-II family. TFA subfamily.

The protein localises to the nucleus. Its function is as follows. May be involved in transcriptional regulation. Modulates various viral and cellular promoters in a promoter context-dependent manner. Does not bind DNA directly. The sequence is that of Transcription elongation factor A protein-like 1 from Rattus norvegicus (Rat).